The sequence spans 322 residues: Mitochondrial glutamate carrier 1 (322 aa).

Solcar repeat units lie at residues 6–93 (ISLP…FRYQ), 101–214 (LTLF…LNEL), and 223–312 (SPFY…GIAE). 6 helical membrane-spanning segments follow: residues 12–32 (LING…IDLA), 62–82 (YFGM…EKAI), 107–127 (MLAG…MEML), 189–209 (GLGA…PLFA), 223–243 (SPFY…AVAV), and 292–312 (ALVI…GIAE).

It belongs to the mitochondrial carrier (TC 2.A.29) family.

Its subcellular location is the mitochondrion inner membrane. It carries out the reaction L-glutamate(in) + H(+)(in) = L-glutamate(out) + H(+)(out). Functionally, mitochondrial glutamate/H(+) symporter. Responsible for the transport of glutamate from the cytosol into the mitochondrial matrix with the concomitant import of a proton. Plays a role in the control of glucose-stimulated insulin secretion. This chain is Mitochondrial glutamate carrier 1 (SLC25A22), found in Bos taurus (Bovine).